Here is a 106-residue protein sequence, read N- to C-terminus: Immunity protein CdiI (106 aa).

As to quaternary structure, forms a contact-dependent growth inhibition complex of CdiA-CT-NC101, CdiI-NC101 and EF-Tu; the complex is a dimer of heterotrimers.

Its function is as follows. Immunity protein component of a toxin-immunity protein module, which functions as a cellular contact-dependent growth inhibition (CDI) system. CDI modules allow bacteria to communicate with and inhibit the growth of closely related neighboring bacteria in a contact-dependent fashion. Neutralizes the toxic activity of cognate toxin CdiA-NC101 (the C-terminal 154 residue CT fragment). Does not inhibit toxic activity of CdiA from other toxin-immunity modules or strains of E.coli. Mediates dimerization of the ternary CdiA-CT-NC101, CdiI-NC101 and EF-Tu complex; both CdiI molecules contact both EF-Tu molecules. In Escherichia coli (strain NC101), this protein is Immunity protein CdiI.